Reading from the N-terminus, the 185-residue chain is Peptidyl-tRNA hydrolase (185 aa).

A tRNA-binding site is contributed by tyrosine 15. The active-site Proton acceptor is the histidine 20. Tyrosine 64, asparagine 66, and asparagine 112 together coordinate tRNA.

This sequence belongs to the PTH family. As to quaternary structure, monomer.

It is found in the cytoplasm. The catalysed reaction is an N-acyl-L-alpha-aminoacyl-tRNA + H2O = an N-acyl-L-amino acid + a tRNA + H(+). Its function is as follows. Hydrolyzes ribosome-free peptidyl-tRNAs (with 1 or more amino acids incorporated), which drop off the ribosome during protein synthesis, or as a result of ribosome stalling. Catalyzes the release of premature peptidyl moieties from peptidyl-tRNA molecules trapped in stalled 50S ribosomal subunits, and thus maintains levels of free tRNAs and 50S ribosomes. This is Peptidyl-tRNA hydrolase from Porphyromonas gingivalis (strain ATCC BAA-308 / W83).